The chain runs to 255 residues: tRNA (guanine-N(7)-)-methyltransferase (255 aa).

The segment at methionine 1–histidine 37 is disordered. S-adenosyl-L-methionine is bound by residues glutamate 80, glutamate 105, aspartate 132, and aspartate 154. Aspartate 154 is an active-site residue. Substrate contacts are provided by lysine 158 and aspartate 190.

This sequence belongs to the class I-like SAM-binding methyltransferase superfamily. TrmB family.

It carries out the reaction guanosine(46) in tRNA + S-adenosyl-L-methionine = N(7)-methylguanosine(46) in tRNA + S-adenosyl-L-homocysteine. The protein operates within tRNA modification; N(7)-methylguanine-tRNA biosynthesis. Its function is as follows. Catalyzes the formation of N(7)-methylguanine at position 46 (m7G46) in tRNA. The protein is tRNA (guanine-N(7)-)-methyltransferase of Nitrobacter hamburgensis (strain DSM 10229 / NCIMB 13809 / X14).